A 631-amino-acid polypeptide reads, in one-letter code: NADPH oxidoreductase A (631 aa).

Positions 73–212 (ILILYGTEYG…CFDRYIDTVC (140 aa)) constitute a Flavodoxin-like domain. Residues 79–83 (TEYGL) and 160–191 (VLAL…KRFR) contribute to the FMN site. The FAD-binding FR-type domain occupies 247–480 (KKPYSSKLLV…INNNPDFRLP (234 aa)). 249–299 (PYSSKLLVKRVLTKGDKVGIHLEFELGDSELKYVPGDALAILPDNAASEVS) contributes to the FAD binding site. 504-630 (QERKALGHTG…KEKRYQKDVW (127 aa)) contributes to the NADP(+) binding site.

It depends on FAD as a cofactor. Requires FMN as cofactor.

Functionally, probable NADPH oxidoreductase that controls development beyond the mound stage. The polypeptide is NADPH oxidoreductase A (redA) (Dictyostelium discoideum (Social amoeba)).